The sequence spans 307 residues: Phospho-N-acetylmuramoyl-pentapeptide-transferase (307 aa).

10 helical membrane passes run 3–23, 47–67, 71–91, 105–125, 137–157, 162–182, 186–206, 210–230, 237–257, and 285–305; these read IILFTSLVAFFVFLLILKYWI, SGTPVMGGIIFLIVSIPFLFF, FFPSLSTILFGLLGLLDDFKL, IFLSFIITLLLYIFSFHDYKI, IFYVILFFVVFIAVPNAINLT, GLAGGTSLITLFFFLIYNFQF, LTLEISLMITALIAFLWFNSH, IFMGDVGAFALGGFIASLSII, LVFLGGIFLIESLSVFIQVFF, and VVWRFYIIHLIMMIGGIILWN.

The protein belongs to the glycosyltransferase 4 family. MraY subfamily. The cofactor is Mg(2+).

The protein localises to the cell inner membrane. The catalysed reaction is UDP-N-acetyl-alpha-D-muramoyl-L-alanyl-gamma-D-glutamyl-meso-2,6-diaminopimeloyl-D-alanyl-D-alanine + di-trans,octa-cis-undecaprenyl phosphate = di-trans,octa-cis-undecaprenyl diphospho-N-acetyl-alpha-D-muramoyl-L-alanyl-D-glutamyl-meso-2,6-diaminopimeloyl-D-alanyl-D-alanine + UMP. The protein operates within cell wall biogenesis; peptidoglycan biosynthesis. Functionally, catalyzes the initial step of the lipid cycle reactions in the biosynthesis of the cell wall peptidoglycan: transfers peptidoglycan precursor phospho-MurNAc-pentapeptide from UDP-MurNAc-pentapeptide onto the lipid carrier undecaprenyl phosphate, yielding undecaprenyl-pyrophosphoryl-MurNAc-pentapeptide, known as lipid I. The sequence is that of Phospho-N-acetylmuramoyl-pentapeptide-transferase from Dictyoglomus turgidum (strain DSM 6724 / Z-1310).